The following is a 255-amino-acid chain: Pimeloyl-[acyl-carrier protein] methyl ester esterase (255 aa).

The AB hydrolase-1 domain occupies 16-242; the sequence is LVLLHGWGMN…SSHAPFITEP (227 aa). Substrate-binding positions include Trp-22, 82 to 83, and 143 to 147; these read SL and FMALQ. Ser-82 (nucleophile) is an active-site residue. Catalysis depends on residues Asp-207 and His-235. His-235 provides a ligand contact to substrate.

This sequence belongs to the AB hydrolase superfamily. Carboxylesterase BioH family. In terms of assembly, monomer.

It is found in the cytoplasm. The catalysed reaction is 6-carboxyhexanoyl-[ACP] methyl ester + H2O = 6-carboxyhexanoyl-[ACP] + methanol + H(+). Its pathway is cofactor biosynthesis; biotin biosynthesis. The physiological role of BioH is to remove the methyl group introduced by BioC when the pimeloyl moiety is complete. It allows to synthesize pimeloyl-ACP via the fatty acid synthetic pathway through the hydrolysis of the ester bonds of pimeloyl-ACP esters. The sequence is that of Pimeloyl-[acyl-carrier protein] methyl ester esterase from Vibrio vulnificus (strain CMCP6).